A 397-amino-acid chain; its full sequence is CCA-adding enzyme (397 aa).

The ATP site is built by glycine 8 and arginine 11. The CTP site is built by glycine 8 and arginine 11. 2 residues coordinate Mg(2+): glutamate 21 and aspartate 23. ATP is bound by residues arginine 91, arginine 137, and arginine 140. CTP contacts are provided by arginine 91, arginine 137, and arginine 140. The 112-residue stretch at 213–324 folds into the HD domain; it reads NLDAAIATLK…LALFNGCDAW (112 aa).

The protein belongs to the tRNA nucleotidyltransferase/poly(A) polymerase family. Bacterial CCA-adding enzyme type 2 subfamily. Mg(2+) serves as cofactor.

It catalyses the reaction a tRNA precursor + 2 CTP + ATP = a tRNA with a 3' CCA end + 3 diphosphate. The enzyme catalyses a tRNA with a 3' CCA end + 2 CTP + ATP = a tRNA with a 3' CCACCA end + 3 diphosphate. Its function is as follows. Catalyzes the addition and repair of the essential 3'-terminal CCA sequence in tRNAs without using a nucleic acid template. Adds these three nucleotides in the order of C, C, and A to the tRNA nucleotide-73, using CTP and ATP as substrates and producing inorganic pyrophosphate. tRNA 3'-terminal CCA addition is required both for tRNA processing and repair. Also involved in tRNA surveillance by mediating tandem CCA addition to generate a CCACCA at the 3' terminus of unstable tRNAs. While stable tRNAs receive only 3'-terminal CCA, unstable tRNAs are marked with CCACCA and rapidly degraded. This is CCA-adding enzyme from Alteromonas mediterranea (strain DSM 17117 / CIP 110805 / LMG 28347 / Deep ecotype).